The sequence spans 745 residues: Elongation factor G, mitochondrial (745 aa).

The region spanning 40–317 (ERIRNIGISA…AVLDYLPNPG (278 aa)) is the tr-type G domain. GTP-binding positions include 49 to 56 (AHIDSGKT), 116 to 120 (DTPGH), and 170 to 173 (NKLD).

Belongs to the TRAFAC class translation factor GTPase superfamily. Classic translation factor GTPase family. EF-G/EF-2 subfamily.

The protein localises to the mitochondrion. Its pathway is protein biosynthesis; polypeptide chain elongation. Functionally, mitochondrial GTPase that catalyzes the GTP-dependent ribosomal translocation step during translation elongation. During this step, the ribosome changes from the pre-translocational (PRE) to the post-translocational (POST) state as the newly formed A-site-bound peptidyl-tRNA and P-site-bound deacylated tRNA move to the P and E sites, respectively. Catalyzes the coordinated movement of the two tRNA molecules, the mRNA and conformational changes in the ribosome. Essential during development as it acts as a retrograde signal from mitochondria to the nucleus to slow down cell proliferation if mitochondrial energy output is low. In Drosophila yakuba (Fruit fly), this protein is Elongation factor G, mitochondrial.